The chain runs to 89 residues: Arminin 7591 (89 aa).

The N-terminal stretch at 1–18 is a signal peptide; the sequence is MRSAFAVLFLALIAITYS. Positions 19-58 are excised as a propeptide; the sequence is KNYEDVKEEIKNEVENEILKDLEEDVNEFDDNVQEEVNDA. L86 carries the post-translational modification Leucine amide.

This sequence belongs to the arminin family. As to expression, expressed in entodermal epithelium along the body column.

It localises to the secreted. The protein resides in the target cell membrane. Its function is as follows. Antimicrobial peptide with a broad-spectrum antimicrobial activity. Keeps its antibacterial activity under a wide range of salt concentrations that mimic physiological conditions of human blood, which is surprising, since Hydra is an obligate freshwater animal with nearly no salt tolerance. Does not affect red blood cells. The polypeptide is Arminin 7591 (Hydra vulgaris (Hydra)).